The primary structure comprises 195 residues: UPF0314 protein RL4541 (195 aa).

4 consecutive transmembrane segments (helical) span residues 15 to 35 (FWFVACFAVLVIQIAVEYMMG), 64 to 84 (WYTPSHIIHGFLFYGLAHLIL), 127 to 147 (GDSILNSAMDTVFMCVGFFFA), and 150 to 170 (APVALTVAIATFFEIFTGYII).

It belongs to the UPF0314 family.

Its subcellular location is the cell membrane. This chain is UPF0314 protein RL4541, found in Rhizobium johnstonii (strain DSM 114642 / LMG 32736 / 3841) (Rhizobium leguminosarum bv. viciae).